Consider the following 523-residue polypeptide: Putative F-box protein At1g30925 (523 aa).

Residues 4 to 44 (FPNDDLVYEILLRLPAKSVARCSCVSKLRRSILSRQDFTEL) enclose the F-box domain.

This Arabidopsis thaliana (Mouse-ear cress) protein is Putative F-box protein At1g30925.